Consider the following 264-residue polypeptide: Propanediol uptake facilitator PduF (264 aa).

The next 2 membrane-spanning stretches (helical) occupy residues 10 to 30 (GAEF…LSAL) and 42 to 62 (ICII…GISG). The NPA 1 motif lies at 66-68 (NPA). A run of 3 helical transmembrane segments spans residues 84-104 (VLPY…LAYV), 143-163 (VWQA…MIMA), and 179-199 (LLIG…TGFA). An NPA 2 motif is present at residues 201–203 (NPA). A helical transmembrane segment spans residues 228-248 (IPYFIVPIVAPVIGACAGAAI).

Belongs to the MIP/aquaporin (TC 1.A.8) family.

It localises to the cell inner membrane. Functionally, probably facilitates diffusion of 1,2-propanediol (1,2-PD) into the cell. Modeling suggests active transport of 1,2-PD is required at low extracellular concentrations to allow maximal growth and saturation of PduP/PduQ within the bacterial microcompartment (BMC); this protein may be the cellular transporter. In terms of biological role, the 1,2-PD-specific bacterial microcompartment (BMC) concentrates low levels of 1,2-PD catabolic enzymes, concentrates volatile reaction intermediates thus enhancing pathway flux and keeps the level of toxic, mutagenic propionaldehyde low. This Salmonella typhimurium (strain LT2 / SGSC1412 / ATCC 700720) protein is Propanediol uptake facilitator PduF.